A 153-amino-acid polypeptide reads, in one-letter code: Large ribosomal subunit protein uL15 (153 aa).

Residues 1–47 are disordered; it reads MRLHELSPAPGSRKDRKRVGRGDAGRGNYSGRGMKGQKARSGGATRP.

It belongs to the universal ribosomal protein uL15 family. As to quaternary structure, part of the 50S ribosomal subunit.

In terms of biological role, binds to the 23S rRNA. The protein is Large ribosomal subunit protein uL15 of Dehalococcoides mccartyi (strain ATCC BAA-2100 / JCM 16839 / KCTC 5957 / BAV1).